Reading from the N-terminus, the 434-residue chain is Probable tRNA pseudouridine synthase D (434 aa).

Residue Asp93 is the Nucleophile of the active site. In terms of domain architecture, TRUD spans 169 to 396 (GTPNYFGQQR…SAGSRRAILL (228 aa)).

This sequence belongs to the pseudouridine synthase TruD family.

It carries out the reaction uridine(13) in tRNA = pseudouridine(13) in tRNA. Functionally, could be responsible for synthesis of pseudouridine from uracil-13 in transfer RNAs. The polypeptide is Probable tRNA pseudouridine synthase D (Halobacterium salinarum (strain ATCC 29341 / DSM 671 / R1)).